The chain runs to 101 residues: MEPVDPNREPWNHPGSQPKTACTNCYCKKCCYHCQVCFLQKGLGISYGRKKRRQRRSAPPGSKTHQDLIPKQPLSQTQRKPTGPEESKKEVESKAEPDRFD.

Residues 1–24 are interaction with human CREBBP; it reads MEPVDPNREPWNHPGSQPKTACTN. Positions 1–48 are transactivation; sequence MEPVDPNREPWNHPGSQPKTACTNCYCKKCCYHCQVCFLQKGLGISYG. Zn(2+) is bound by residues Cys-22, Cys-25, and Cys-27. A cysteine-rich region spans residues 22–37; it reads CTNCYCKKCCYHCQVC. At Lys-28 the chain carries N6-acetyllysine; by host PCAF. Cys-30, His-33, Cys-34, and Cys-37 together coordinate Zn(2+). The interval 38–48 is core; sequence FLQKGLGISYG. Residues 48 to 101 are disordered; sequence GRKKRRQRRSAPPGSKTHQDLIPKQPLSQTQRKPTGPEESKKEVESKAEPDRFD. The short motif at 49-57 is the Nuclear localization signal, RNA-binding (TAR), and protein transduction element; sequence RKKRRQRRS. The interaction with the host capping enzyme RNGTT stretch occupies residues 49-86; that stretch reads RKKRRQRRSAPPGSKTHQDLIPKQPLSQTQRKPTGPEE. N6-acetyllysine; by host EP300 and GCN5L2 is present on residues Lys-50 and Lys-51. Asymmetric dimethylarginine; by host PRMT6 is present on residues Arg-52 and Arg-53. Lys-71 is covalently cross-linked (Glycyl lysine isopeptide (Lys-Gly) (interchain with G-Cter in ubiquitin)). The segment covering 82-101 has biased composition (basic and acidic residues); it reads TGPEESKKEVESKAEPDRFD.

Belongs to the lentiviruses Tat family. As to quaternary structure, interacts with host CCNT1. Associates with the P-TEFb complex composed at least of Tat, P-TEFb (CDK9 and CCNT1), TAR RNA, RNA Pol II. Recruits the HATs CREBBP, TAF1/TFIID, EP300, PCAF and GCN5L2. Interacts with host KAT5/Tip60; this interaction targets the latter to degradation. Interacts with the host deacetylase SIRT1. Interacts with host capping enzyme RNGTT; this interaction stimulates RNGTT. Binds to host KDR, and to the host integrins ITGAV/ITGB3 and ITGA5/ITGB1. Interacts with host KPNB1/importin beta-1 without previous binding to KPNA1/importin alpha-1. Interacts with EIF2AK2. Interacts with host nucleosome assembly protein NAP1L1; this interaction may be required for the transport of Tat within the nucleus, since the two proteins interact at the nuclear rim. Interacts with host C1QBP/SF2P32; this interaction involves lysine-acetylated Tat. Interacts with the host chemokine receptors CCR2, CCR3 and CXCR4. Interacts with host DPP4/CD26; this interaction may trigger an anti-proliferative effect. Interacts with host LDLR. Interacts with the host extracellular matrix metalloproteinase MMP1. Interacts with host PRMT6; this interaction mediates Tat's methylation. Interacts with, and is ubiquitinated by MDM2/Hdm2. Interacts with host PSMC3 and HTATIP2. Interacts with STAB1; this interaction may overcome SATB1-mediated repression of IL2 and IL2RA (interleukin) in T cells by binding to the same domain than HDAC1. Interacts (when acetylated) with human CDK13, thereby increasing HIV-1 mRNA splicing and promoting the production of the doubly spliced HIV-1 protein Nef. Interacts with host TBP; this interaction modulates the activity of transcriptional pre-initiation complex. Interacts with host RELA. Interacts with host PLSCR1; this interaction negatively regulates Tat transactivation activity by altering its subcellular distribution. Post-translationally, asymmetrical arginine methylation by host PRMT6 seems to diminish the transactivation capacity of Tat and affects the interaction with host CCNT1. In terms of processing, acetylation by EP300, CREBBP, GCN5L2/GCN5 and PCAF regulates the transactivation activity of Tat. EP300-mediated acetylation of Lys-50 promotes dissociation of Tat from the TAR RNA through the competitive binding to PCAF's bromodomain. In addition, the non-acetylated Tat's N-terminus can also interact with PCAF. PCAF-mediated acetylation of Lys-28 enhances Tat's binding to CCNT1. Lys-50 is deacetylated by SIRT1. Polyubiquitination by host MDM2 does not target Tat to degradation, but activates its transactivation function and fosters interaction with CCNT1 and TAR RNA. Post-translationally, phosphorylated by EIF2AK2 on serine and threonine residues adjacent to the basic region important for TAR RNA binding and function. Phosphorylation of Tat by EIF2AK2 is dependent on the prior activation of EIF2AK2 by dsRNA.

The protein resides in the host nucleus. It is found in the host nucleolus. The protein localises to the host cytoplasm. Its subcellular location is the secreted. Transcriptional activator that increases RNA Pol II processivity, thereby increasing the level of full-length viral transcripts. Recognizes a hairpin structure at the 5'-LTR of the nascent viral mRNAs referred to as the transactivation responsive RNA element (TAR) and recruits the cyclin T1-CDK9 complex (P-TEFb complex) that will in turn hyperphosphorylate the RNA polymerase II to allow efficient elongation. The CDK9 component of P-TEFb and other Tat-activated kinases hyperphosphorylate the C-terminus of RNA Pol II that becomes stabilized and much more processive. Other factors such as HTATSF1/Tat-SF1, SUPT5H/SPT5, and HTATIP2 are also important for Tat's function. Besides its effect on RNA Pol II processivity, Tat induces chromatin remodeling of proviral genes by recruiting the histone acetyltransferases (HATs) CREBBP, EP300 and PCAF to the chromatin. This also contributes to the increase in proviral transcription rate, especially when the provirus integrates in transcriptionally silent region of the host genome. To ensure maximal activation of the LTR, Tat mediates nuclear translocation of NF-kappa-B by interacting with host RELA. Through its interaction with host TBP, Tat may also modulate transcription initiation. Tat can reactivate a latently infected cell by penetrating in it and transactivating its LTR promoter. In the cytoplasm, Tat is thought to act as a translational activator of HIV-1 mRNAs. Its function is as follows. Extracellular circulating Tat can be endocytosed by surrounding uninfected cells via the binding to several surface receptors such as CD26, CXCR4, heparan sulfate proteoglycans (HSPG) or LDLR. Neurons are rarely infected, but they internalize Tat via their LDLR. Through its interaction with nuclear HATs, Tat is potentially able to control the acetylation-dependent cellular gene expression. Modulates the expression of many cellular genes involved in cell survival, proliferation or in coding for cytokines or cytokine receptors. Tat plays a role in T-cell and neurons apoptosis. Tat induced neurotoxicity and apoptosis probably contribute to neuroAIDS. Circulating Tat also acts as a chemokine-like and/or growth factor-like molecule that binds to specific receptors on the surface of the cells, affecting many cellular pathways. In the vascular system, Tat binds to ITGAV/ITGB3 and ITGA5/ITGB1 integrins dimers at the surface of endothelial cells and competes with bFGF for heparin-binding sites, leading to an excess of soluble bFGF. The chain is Protein Tat from Homo sapiens (Human).